The sequence spans 183 residues: Translation initiation factor IF-3 (183 aa).

The protein belongs to the IF-3 family. In terms of assembly, monomer.

It localises to the cytoplasm. IF-3 binds to the 30S ribosomal subunit and shifts the equilibrium between 70S ribosomes and their 50S and 30S subunits in favor of the free subunits, thus enhancing the availability of 30S subunits on which protein synthesis initiation begins. The polypeptide is Translation initiation factor IF-3 (Serratia marcescens).